A 250-amino-acid chain; its full sequence is 2,3-bisphosphoglycerate-dependent phosphoglycerate mutase (250 aa).

Substrate is bound by residues 10 to 17 (RHGESQWN), 23 to 24 (TG), Arg62, 89 to 92 (ERHY), Lys100, 116 to 117 (RR), and 185 to 186 (GN). The active-site Tele-phosphohistidine intermediate is the His11. The active-site Proton donor/acceptor is Glu89.

The protein belongs to the phosphoglycerate mutase family. BPG-dependent PGAM subfamily. In terms of assembly, homodimer.

The catalysed reaction is (2R)-2-phosphoglycerate = (2R)-3-phosphoglycerate. Its pathway is carbohydrate degradation; glycolysis; pyruvate from D-glyceraldehyde 3-phosphate: step 3/5. Catalyzes the interconversion of 2-phosphoglycerate and 3-phosphoglycerate. This chain is 2,3-bisphosphoglycerate-dependent phosphoglycerate mutase, found in Escherichia coli O139:H28 (strain E24377A / ETEC).